The following is a 395-amino-acid chain: Xylose isomerase (395 aa).

Active-site residues include H54 and D57. Mg(2+)-binding residues include E181, E217, H220, D245, D255, D257, and D293.

This sequence belongs to the xylose isomerase family. Homotetramer. Requires Mg(2+) as cofactor.

The protein localises to the cytoplasm. The catalysed reaction is alpha-D-xylose = alpha-D-xylulofuranose. This chain is Xylose isomerase (xylA), found in Arthrobacter sp. (strain NRRL B3728).